The chain runs to 1159 residues: CRISPR-associated endoribonuclease Cas13a (1159 aa).

The binds crRNA repeat and spacer stretch occupies residues 1-11 (MKVTKVGGISH). The tract at residues 1–170 (MKVTKVGGIS…NNIEKVEGKS (170 aa)) is NTD. Binds crRNA repeat stretches follow at residues 139 to 151 (NKINSLKYSFEKN), 172 to 176 (RNIIY), 224 to 233 (REFYHEIIGR), 271 to 276 (QVFYKY), 294 to 297 (HFVE), and 301 to 305 (SQLLK). A helical-1 region spans residues 171–360 (KRNIIYDYYR…YNYYLQDGEI (190 aa)). The interval 319-328 (KIKRIFEYQN) is binds crRNA processing site. Binds crRNA repeat stretches follow at residues 336 to 340 (KLLNK) and 371 to 378 (QNEAFLRN). The tract at residues 361–508 (ATSDFIARNR…SKKMFQNEIN (148 aa)) is HEPN-like fold 1-I. Catalysis depends on for target RNA cleavage residues Arg-472 and His-477. A helical-2 region spans residues 509–751 (EKKLKLKIFR…EFLREIKLGN (243 aa)). The binds target RNA stretch occupies residues 519–522 (QLNS). Residues 547-558 (NKNIPFVPSFTK) form a binds crRNA spacer region. The interval 590–597 (DAQIYLLK) is binds target RNA. The interval 718 to 722 (KQEFD) is binds crRNA spacer. The tract at residues 752–813 (ILKYTERLNM…NLDNNRVTED (62 aa)) is HEPN-like fold 1-II. The tract at residues 780-783 (SLEK) is binds crRNA repeat. The binds crRNA spacer and target RNA stretch occupies residues 804-810 (NLDNNRV). A linker region spans residues 814-946 (FELEADEIGK…EYTHLKNKVE (133 aa)). 2 binds crRNA spacer regions span residues 845–857 (KIYFDGENIIKHR) and 938–942 (YTHLK). Residues 880–946 (YKISIEELKK…EYTHLKNKVE (67 aa)) adopt a coiled-coil conformation. Positions 947–1159 (FNELNLLQGL…YKMEEKKSEN (213 aa)) are HEPN-like fold 2. A binds crRNA repeat region spans residues 962 to 963 (HR). The interval 995–998 (FENK) is binds 3'-end of target RNA, in adjacent protein. Active-site for target RNA cleavage residues include Arg-1048 and His-1053. Binds crRNA processing site regions lie at residues 1072–1082 (RKLLSYDRKLK) and 1104–1108 (IGADK).

The protein belongs to the CRISPR-associated endoribonuclease Cas13a family. Crystals show the 3'-end of target RNA interacting with an adjacent protein molecule, and mutagenesis of those amino acid residues decreases target RNA cleavage, but it is not clear if this is physiological. It depends on a divalent metal cation as a cofactor.

Its activity is regulated as follows. Target RNA acts as an activator for non-specific ssRNA cleavage; the target RNA and complementary crRNA must both be at least 20 nucleotides long to activate the HEPN-like catalytic pocket for RNase activity. In terms of biological role, CRISPR (clustered regularly interspaced short palindromic repeat), is an adaptive immune system that provides protection against mobile genetic elements (viruses, transposable elements and conjugative plasmids). CRISPR clusters contain sequences complementary to antecedent mobile elements (spacer sequences) and target invading nucleic acids. Unlike many single-component effectors, this CRISPR-Cas system targets RNA. CRISPR clusters are transcribed from pre-CRISPR RNA (crRNA) and processed into crRNA by this protein. pre-crRNA processing yields a 5'-OH and probably a 2',3'-cyclic phosphate. Also cleaves pre-crRNA from several other type VI-A CRISPR systems. Cleaves linear target ssRNA in a crRNA-dependent fashion, preferentially before U residues. Cleavage of target ssRNA is about 80-fold faster than pre-crRNA processing and uses a different active site. Binding a viable target RNA target activates this protein for non-specific RNA degradation in vitro (called collateral RNA degradation). Activation occurs with 10 fM target RNA. crRNA maturation is not essential for activation of RNA degradation, but lack of mature crRNA (due to mutagenesis) decreases activation levels. This system has a 3' protospacer flanking site in the target RNA (PFS), which is C and unavailable to base pair with crRNA (PFS is equivalent to PAM, the protospacer adjacent motif). The polypeptide is CRISPR-associated endoribonuclease Cas13a (Leptotrichia buccalis (strain ATCC 14201 / DSM 1135 / JCM 12969 / NCTC 10249 / C-1013-b)).